We begin with the raw amino-acid sequence, 1036 residues long: Lethal(2) giant larvae protein homolog 1 (1036 aa).

WD repeat units lie at residues 38 to 71 (SALA…FTGL), 78 to 119 (VTQM…GLSF), 139 to 175 (VTVV…GQTL), 199 to 233 (SLQG…EHVF), 239 to 271 (LESL…GSPP), 289 to 331 (AINK…ETLV), 339 to 373 (VIDF…VLDL), 395 to 473 (TCSA…YKLS), 517 to 592 (QKVA…RVLI), and 601 to 662 (TAVA…LRQS). Position 662 is a phosphoserine (S662). Residues 670 to 694 (RVSGKKRATTASSKLQEANAQLAEQ) form a disordered region. Residues 678 to 693 (TTASSKLQEANAQLAE) show a composition bias toward polar residues. WD repeat units lie at residues 722-782 (VRCL…KEVQ), 791-843 (AIAV…VSAK), 848-901 (LTAH…VHYS), and 915-938 (VFTR…SLSA). At T957 the chain carries Phosphothreonine. Phosphoserine occurs at positions 964, 982, and 989. The tract at residues 980-1002 (PESCEGSPSSAHSKRADTMEPPE) is disordered.

Belongs to the WD repeat L(2)GL family. In terms of assembly, associated with nonmuscle myosin II heavy chain. Interacts with PRKCI/aPKC, PARD6B/Par-6 and PARD6A. Interacts with STX4A. Interacts with DCAF1. Interacts with RAB10 (GDP-bound form); the interaction is direct and promotes RAB10 association with membranes and activation through competition with the Rab inhibitor GDI1. Phosphorylated by PRKCI. In terms of tissue distribution, expressed at high level in the testis and at lower level in ovary, brain, spleen and kidney.

It localises to the early endosome membrane. The protein localises to the golgi apparatus. The protein resides in the trans-Golgi network membrane. It is found in the golgi apparatus membrane. Its subcellular location is the cell projection. It localises to the axon. The protein localises to the cytoplasm. The protein resides in the cytoskeleton. Functionally, cortical cytoskeleton protein found in a complex involved in maintaining cell polarity and epithelial integrity. Involved in the regulation of mitotic spindle orientation, proliferation, differentiation and tissue organization of neuroepithelial cells. Involved in axonogenesis through RAB10 activation thereby regulating vesicular membrane trafficking toward the axonal plasma membrane. The protein is Lethal(2) giant larvae protein homolog 1 (Llgl1) of Rattus norvegicus (Rat).